Consider the following 494-residue polypeptide: Cytochrome P450 monooxygenase ccsD (494 aa).

A helical transmembrane segment spans residues Ile-5–Ser-25. Cys-438 contacts heme. 2 N-linked (GlcNAc...) asparagine glycosylation sites follow: Asn-445 and Asn-477.

Belongs to the cytochrome P450 family. It depends on heme as a cofactor.

It is found in the membrane. The protein operates within mycotoxin biosynthesis. Cytochrome P450 monooxygenase; part of the gene cluster that mediates the biosynthesis of a family of the mycotoxins cytochalasins E and K. The hybrid PKS-NRPS synthetase ccsA and the enoyl reductase ccsC are responsible for fusion of phenylalanine with an octaketide backbone and subsequent release of the stable tetramic acid precursor. The polyketide synthase module (PKS) of the PKS-NRPS ccsA is responsible for the synthesis of the octaketide backbone. The downstream nonribosomal peptide synthetase (NRPS) amidates the carboxyl end of the octaketide with a phenylalanine. A reductase-like domain (R) at the C-terminus catalyzes the reductive release of the polyketide-amino acid intermediate. Because ccsA lacks a designated enoylreductase (ER) domain, the required activity is provided the enoyl reductase ccsC. Upon formation of the 11-membered carbocycle-fused perhydroisoindolone intermediate, a number of oxidative steps are required to afford the final cytochalasin E and K, including two hydroxylations at C17 and C18, one alcohol oxidation at C17, one epoxidation at C6 and C7 and two Baeyer-Villiger oxidations. The oxidative modification at C17, C18 and the C6-C7 epoxidation are likely to be catalyzed by the two cytochrome P450 oxygenases ccsD and ccsG. CcsD may be responsible for the epoxidation of the C6-C7 double bond. CcsG may be responsible for the successive oxidative modifications at C17 and C18. The double Baeyer-Villiger oxidations of ketocytochalasin to precytochalasin and cytochalasin Z(16) are among the final steps leading to cytochalasin E and K and are catalyzed by ccsB. The first oxygen insertion step follows that of the classic BVMO mechanism, generating the ester precytochalasin. Release of precytochalasin into an aqueous environment can generate the shunt product iso-precytochalasin through spontaneous isomerization. Alternatively, precytochalasin can undergo further oxidation by ccsB to yield the in-line carbonate-containing cytochalasin Z(16). Cytochalasin Z(16) is a precursor to cytochalasin E and cytochalasin K, whereas iso-precytochalasin is a precursor to cytochalasin Z(17) and rosellichalasin. The hydrolyase ccsE may catalyze hydrolysis of epoxide bond in cytochalasin E to afford cytochalasin K. The function of ccsF has not been assigned but it may play a role in post-PKS-NRPS biosynthetic step, resistance or transport of cytochalasins and related PKS-NRPS products. In Aspergillus clavatus (strain ATCC 1007 / CBS 513.65 / DSM 816 / NCTC 3887 / NRRL 1 / QM 1276 / 107), this protein is Cytochrome P450 monooxygenase ccsD.